The chain runs to 153 residues: DNA gyrase inhibitor 1 (153 aa).

Belongs to the DNA gyrase inhibitor family. Interacts with DNA gyrase.

The protein localises to the cytoplasm. In terms of biological role, inhibits the supercoiling activity of DNA gyrase. Acts by inhibiting DNA gyrase at an early step, prior to (or at the step of) binding of DNA by the gyrase. It protects cells against toxins that target DNA gyrase, by inhibiting activity of these toxins and reducing the formation of lethal double-strand breaks in the cell. The sequence is that of DNA gyrase inhibitor 1 from Dickeya dadantii (strain 3937) (Erwinia chrysanthemi (strain 3937)).